The primary structure comprises 119 residues: MKGMIFLAAAILSEVFGSTMLKLSEGFSAPLPAAGVIIGFAASFTFLSFSLKTLPLSAAYATWAGTGTALTAAIGHFIFQEPFNLKTLIGLTLIIGGVFLLNSKRTEAADQKAQLTIEI.

4 helical membrane-spanning segments follow: residues 3-23 (GMIF…MLKL), 31-51 (LPAA…SFSL), 59-79 (AYAT…HFIF), and 81-101 (EPFN…VFLL).

The protein belongs to the drug/metabolite transporter (DMT) superfamily. Small multidrug resistance (SMR) (TC 2.A.7.1) family. EbrA/EbrB subfamily. As to quaternary structure, the efflux pump is composed of EbrA and EbrB.

The protein resides in the cell membrane. In terms of biological role, part of a multidrug efflux pump. Confers resistance to cationic lipophilic dyes such as ethidium bromide, acriflavine, pyronine Y and safranin O. The efflux is probably coupled to an influx of protons. The polypeptide is Multidrug resistance protein EbrB (ebrB) (Bacillus licheniformis (strain ATCC 14580 / DSM 13 / JCM 2505 / CCUG 7422 / NBRC 12200 / NCIMB 9375 / NCTC 10341 / NRRL NRS-1264 / Gibson 46)).